We begin with the raw amino-acid sequence, 282 residues long: Bis(5'-nucleosyl)-tetraphosphatase, symmetrical (282 aa).

Belongs to the Ap4A hydrolase family.

The catalysed reaction is P(1),P(4)-bis(5'-adenosyl) tetraphosphate + H2O = 2 ADP + 2 H(+). Its function is as follows. Hydrolyzes diadenosine 5',5'''-P1,P4-tetraphosphate to yield ADP. The chain is Bis(5'-nucleosyl)-tetraphosphatase, symmetrical from Salmonella paratyphi C (strain RKS4594).